We begin with the raw amino-acid sequence, 290 residues long: 33 kDa chaperonin (290 aa).

Cystine bridges form between C231–C233 and C263–C266.

Belongs to the HSP33 family. Post-translationally, under oxidizing conditions two disulfide bonds are formed involving the reactive cysteines. Under reducing conditions zinc is bound to the reactive cysteines and the protein is inactive.

Its subcellular location is the cytoplasm. In terms of biological role, redox regulated molecular chaperone. Protects both thermally unfolding and oxidatively damaged proteins from irreversible aggregation. Plays an important role in the bacterial defense system toward oxidative stress. The protein is 33 kDa chaperonin of Thermotoga sp. (strain RQ2).